Here is a 229-residue protein sequence, read N- to C-terminus: Large ribosomal subunit protein uL1 (229 aa).

This sequence belongs to the universal ribosomal protein uL1 family. As to quaternary structure, part of the 50S ribosomal subunit.

Functionally, binds directly to 23S rRNA. The L1 stalk is quite mobile in the ribosome, and is involved in E site tRNA release. In terms of biological role, protein L1 is also a translational repressor protein, it controls the translation of the L11 operon by binding to its mRNA. This chain is Large ribosomal subunit protein uL1, found in Streptococcus pyogenes serotype M3 (strain SSI-1).